We begin with the raw amino-acid sequence, 454 residues long: Protection of telomeres protein 1b (454 aa).

It belongs to the telombin family. Interacts with TRB1, TRB2 and TRB3. Expressed at low levels in roots, rosette leaves, cauline leaves, stems and flowers.

The protein localises to the nucleus. Its subcellular location is the chromosome. It is found in the telomere. Its function is as follows. Negatively regulates telomerase activity and participates in chromosome end protection. Binds RNA non-specifically. Associates with a regulatory Pol III-dependent lncRNA, which represses telomerase activity in response to DNA damage. Binds single-stranded telomeric DNA with weak affinity. In Arabidopsis thaliana (Mouse-ear cress), this protein is Protection of telomeres protein 1b.